Reading from the N-terminus, the 495-residue chain is UDP-N-acetylmuramoyl-L-alanyl-D-glutamate--2,6-diaminopimelate ligase (495 aa).

UDP-N-acetyl-alpha-D-muramoyl-L-alanyl-D-glutamate is bound by residues leucine 32 and serine 34. ATP is bound at residue 119-125 (GTNGKTT). Residues asparagine 160, 161 to 162 (TT), serine 188, glutamine 194, and arginine 196 contribute to the UDP-N-acetyl-alpha-D-muramoyl-L-alanyl-D-glutamate site. An N6-carboxylysine modification is found at lysine 228. Meso-2,6-diaminopimelate is bound by residues arginine 390, 414–417 (DNPR), glycine 465, and glutamate 469. The Meso-diaminopimelate recognition motif motif lies at 414 to 417 (DNPR).

The protein belongs to the MurCDEF family. MurE subfamily. Mg(2+) is required as a cofactor. In terms of processing, carboxylation is probably crucial for Mg(2+) binding and, consequently, for the gamma-phosphate positioning of ATP.

The protein localises to the cytoplasm. The enzyme catalyses UDP-N-acetyl-alpha-D-muramoyl-L-alanyl-D-glutamate + meso-2,6-diaminopimelate + ATP = UDP-N-acetyl-alpha-D-muramoyl-L-alanyl-gamma-D-glutamyl-meso-2,6-diaminopimelate + ADP + phosphate + H(+). Its pathway is cell wall biogenesis; peptidoglycan biosynthesis. Its function is as follows. Catalyzes the addition of meso-diaminopimelic acid to the nucleotide precursor UDP-N-acetylmuramoyl-L-alanyl-D-glutamate (UMAG) in the biosynthesis of bacterial cell-wall peptidoglycan. In Vibrio cholerae serotype O1 (strain ATCC 39315 / El Tor Inaba N16961), this protein is UDP-N-acetylmuramoyl-L-alanyl-D-glutamate--2,6-diaminopimelate ligase.